A 399-amino-acid chain; its full sequence is P2X purinoceptor 1 (399 aa).

Residues 1 to 28 are Cytoplasmic-facing; it reads MARRLQDELSAFFFEYDTPRMVLVRNKK. A helical membrane pass occupies residues 29 to 50; the sequence is VGVIFRLIQLVVLVYVIGWVFV. Residues 51–338 lie on the Extracellular side of the membrane; that stretch reads YEKGYQTSSG…IPTMTTIGSG (288 aa). CTP contacts are provided by lysine 68, lysine 70, and lysine 140. ATP is bound at residue lysine 70. 3 cysteine pairs are disulfide-bonded: cysteine 117-cysteine 165, cysteine 126-cysteine 149, and cysteine 132-cysteine 159. Asparagine 153 and asparagine 184 each carry an N-linked (GlcNAc...) asparagine glycan. CTP is bound at residue threonine 186. Threonine 186 lines the ATP pocket. An N-linked (GlcNAc...) asparagine glycan is attached at asparagine 210. Intrachain disulfides connect cysteine 217–cysteine 227 and cysteine 261–cysteine 270. 3 residues coordinate ATP: serine 286, asparagine 290, and arginine 292. CTP contacts are provided by asparagine 290 and arginine 292. An N-linked (GlcNAc...) asparagine glycan is attached at asparagine 300. Position 309 (lysine 309) interacts with CTP. ATP is bound at residue lysine 309. The interval 331 to 338 is pore-forming motif; the sequence is TMTTIGSG. Residues 339–358 form a helical membrane-spanning segment; that stretch reads IGIFGVATVLCDLLLLHILP. The Cytoplasmic segment spans residues 359–399; it reads KRHYYKQKKFKYAEDMGPGEGERDPAATSSTLGLQENMRTS. A disordered region spans residues 374–399; it reads MGPGEGERDPAATSSTLGLQENMRTS. Residues 385-399 are compositionally biased toward polar residues; sequence ATSSTLGLQENMRTS. Residues serine 387 and serine 388 each carry the phosphoserine modification. A Phosphothreonine modification is found at threonine 389.

It belongs to the P2X receptor family. In terms of assembly, functional P2XRs are organized as homomeric and heteromeric trimers. Forms heterodimer with P2RX2. Forms heterodimer with P2RX4. Forms heterodimer with P2RX5. Expressed in smooth muscle of the bladder and arteries.

The protein localises to the cell membrane. It catalyses the reaction Ca(2+)(in) = Ca(2+)(out). It carries out the reaction K(+)(in) = K(+)(out). The catalysed reaction is Na(+)(in) = Na(+)(out). With respect to regulation, activated by low concentrations of ATP (&lt;1 uM). Undergoes rapid desensitisation. Sensitives to the ATP agonist:alpha/beta-methylene-ATP. Modulated by cholesterol. Its function is as follows. ATP-gated nonselective transmembrane cation channel permeable to potassium, sodium and with relatively high calcium permeability. Furthermore, CTP functions as a weak affinity agonist for P2RX1. Plays a role in male fertility, bladder contraction and platelet aggregation. Specifically, plays an important role in neurogenic contraction of smooth muscle of the vas deferens, and therefore is essential for normal male reproductive function. In addition, contributes to smooth muscle contractions of the urinary bladder. On platelets, contributes to platelet activation and aggregation and thereby, also to thrombosis. On neutrophils, it is involved in chemotaxis and in mitigating the activation of circulating cells. This chain is P2X purinoceptor 1 (P2rx1), found in Mus musculus (Mouse).